Reading from the N-terminus, the 120-residue chain is uncharacterized protein (120 aa).

The chain crosses the membrane as a helical span at residues Tyr-19 to Gly-41. The tract at residues Ser-57–Asp-78 is disordered. The span at His-61–Glu-75 shows a compositional bias: basic and acidic residues.

The protein resides in the membrane. This is an uncharacterized protein from Schizosaccharomyces pombe (strain 972 / ATCC 24843) (Fission yeast).